Here is a 345-residue protein sequence, read N- to C-terminus: Opioid-binding protein/cell adhesion molecule (345 aa).

A signal peptide spans 1 to 27 (MGVCGYLFLPWKCLVVVSLRLLFLVPT). 3 consecutive Ig-like C2-type domains span residues 39–126 (PKAM…PKTS), 136–219 (PQIM…VKIT), and 223–310 (PPYI…ASIT). 3 N-linked (GlcNAc...) asparagine glycosylation sites follow: Asn-44, Asn-70, and Asn-140. Cysteines 57 and 115 form a disulfide. 2 disulfide bridges follow: Cys-157-Cys-202 and Cys-244-Cys-296. N-linked (GlcNAc...) asparagine glycosylation is found at Asn-285, Asn-293, and Asn-306. A lipid anchor (GPI-anchor amidated asparagine) is attached at Asn-322. A propeptide spans 323-345 (SASRALACLWLSGTLLAHFFIKF) (removed in mature form).

It belongs to the immunoglobulin superfamily. IgLON family.

The protein resides in the cell membrane. In terms of biological role, binds opioids in the presence of acidic lipids; probably involved in cell contact. The sequence is that of Opioid-binding protein/cell adhesion molecule (OPCML) from Homo sapiens (Human).